The following is a 343-amino-acid chain: Adenosine kinase (343 aa).

Residue D296 is part of the active site.

This sequence belongs to the carbohydrate kinase PfkB family. Mg(2+) is required as a cofactor.

It carries out the reaction adenosine + ATP = AMP + ADP + H(+). It participates in purine metabolism; AMP biosynthesis via salvage pathway; AMP from adenosine: step 1/1. In terms of biological role, ATP dependent phosphorylation of adenosine and other related nucleoside analogs to monophosphate derivatives. Can also act on the cytokinin isopentenyladenosine to produce isopentenyladenosine monophosphate. The protein is Adenosine kinase (ADK) of Physcomitrium patens (Spreading-leaved earth moss).